The sequence spans 321 residues: Phosphatidate cytidylyltransferase, mitochondrial (321 aa).

This sequence belongs to the TAM41 family. Mg(2+) is required as a cofactor. The cofactor is Co(2+). Cu(2+) serves as cofactor.

It localises to the mitochondrion inner membrane. The catalysed reaction is a 1,2-diacyl-sn-glycero-3-phosphate + CTP + H(+) = a CDP-1,2-diacyl-sn-glycerol + diphosphate. It participates in phospholipid metabolism; CDP-diacylglycerol biosynthesis; CDP-diacylglycerol from sn-glycerol 3-phosphate: step 3/3. Its function is as follows. Catalyzes the formation of CDP-diacylglycerol (CDP-DAG) from phosphatidic acid (PA) in the mitochondrial inner membrane. Required for the biosynthesis of the dimeric phospholipid cardiolipin, which stabilizes supercomplexes of the mitochondrial respiratory chain in the mitochondrial inner membrane. In Caenorhabditis elegans, this protein is Phosphatidate cytidylyltransferase, mitochondrial.